The primary structure comprises 476 residues: 23S rRNA (uracil(1939)-C(5))-methyltransferase RlmD (476 aa).

The 55-residue stretch at 1–55 (MVDEVLKIESLDLEARGIARRDGKVVFVEGALPGERVYAATVRRKPSYEIARVET) folds into the TRAM domain. Residues Cys68, Cys74, Cys77, and Cys156 each contribute to the [4Fe-4S] cluster site. Positions 265, 294, 299, 315, 343, and 364 each coordinate S-adenosyl-L-methionine. Cys394 (nucleophile) is an active-site residue.

Belongs to the class I-like SAM-binding methyltransferase superfamily. RNA M5U methyltransferase family. RlmD subfamily.

It carries out the reaction uridine(1939) in 23S rRNA + S-adenosyl-L-methionine = 5-methyluridine(1939) in 23S rRNA + S-adenosyl-L-homocysteine + H(+). Functionally, catalyzes the formation of 5-methyl-uridine at position 1939 (m5U1939) in 23S rRNA. In Bordetella avium (strain 197N), this protein is 23S rRNA (uracil(1939)-C(5))-methyltransferase RlmD.